The chain runs to 51 residues: DNA-binding protein (51 aa).

A disordered region spans residues M1–Y51. Repeat copies occupy residues R5 to S10 and R17 to S22. Residues R5–S22 form a 2 X 6 AA repeats of R-R-R-R-S-S region. Residues T16–Y51 show a composition bias toward basic residues.

Probably phosphorylated in infected cells.

The protein resides in the virion. Thought to be responsible for DNA condensation during packaging of the nucleocapsids. This is DNA-binding protein (P6.5) from Orgyia pseudotsugata (Douglas-fir tussock moth).